The sequence spans 810 residues: Plasminogen (810 aa).

The signal sequence occupies residues 1-19 (MQRKELVLLFLLFLQPGHG). The 79-residue stretch at 20–98 (IPLDDYVTTQ…RDVILFEKKM (79 aa)) folds into the PAN domain. Disulfide bonds link Cys-49–Cys-73, Cys-53–Cys-61, Cys-103–Cys-181, Cys-124–Cys-164, Cys-152–Cys-176, Cys-185–Cys-262, Cys-188–Cys-316, Cys-206–Cys-245, Cys-234–Cys-257, Cys-275–Cys-352, Cys-296–Cys-335, Cys-324–Cys-347, Cys-379–Cys-456, Cys-400–Cys-439, Cys-428–Cys-451, Cys-482–Cys-561, Cys-503–Cys-544, Cys-532–Cys-556, Cys-569–Cys-685, Cys-579–Cys-586, Cys-607–Cys-623, Cys-699–Cys-766, Cys-729–Cys-745, and Cys-756–Cys-784. 5 Kringle domains span residues 103–181 (CKVG…IIQC), 185–262 (CMHC…IPRC), 275–352 (CLMG…IPDC), 379–456 (CYQG…LKKC), and 482–561 (CIID…IPHC). N-linked (GlcNAc...) asparagine glycosylation occurs at Asn-339. Residues 398 to 418 (KKCQPWTSMRPHRHSKTPENY) are disordered. In terms of domain architecture, Peptidase S1 spans 582–808 (RVGGCVAHPH…YVSWLQDVMR (227 aa)). Residue Ser-598 is modified to Phosphoserine. Catalysis depends on charge relay system residues His-622 and Asp-665. The active-site Charge relay system is Ser-760.

This sequence belongs to the peptidase S1 family. Plasminogen subfamily. As to quaternary structure, interacts with CSPG4 and AMOT. Interacts (via the Kringle domains) with HRG; the interaction tethers PLG to the cell surface and enhances its activation. Interacts (via Kringle 4 domain) with ADA; the interaction stimulates PLG activation when in complex with DPP4. Angiostatin: Interacts with ATP5F1A; the interaction inhibits most of the angiogenic effects of angiostatin. In the presence of the inhibitor, the activation involves only cleavage after Arg-582, yielding two chains held together by two disulfide bonds. In the absence of the inhibitor, the activation involves additionally the removal of the activation peptide.

The protein resides in the secreted. It catalyses the reaction Preferential cleavage: Lys-|-Xaa &gt; Arg-|-Xaa, higher selectivity than trypsin. Converts fibrin into soluble products.. Converted into plasmin by plasminogen activators, both plasminogen and its activator being bound to fibrin. Cannot be activated with streptokinase. In terms of biological role, plasmin dissolves the fibrin of blood clots and acts as a proteolytic factor in a variety of other processes including embryonic development, tissue remodeling, tumor invasion, and inflammation. In ovulation, weakens the walls of the Graafian follicle. It activates the urokinase-type plasminogen activator, collagenases and several complement zymogens, such as C1, C4 and C5. Cleavage of fibronectin and laminin leads to cell detachment and apoptosis. Also cleaves fibrin, thrombospondin and von Willebrand factor. Its role in tissue remodeling and tumor invasion may be modulated by CSPG4. Binds to cells. The protein is Plasminogen (PLG) of Erinaceus europaeus (Western European hedgehog).